The primary structure comprises 2294 residues: Reducing polyketide synthase BOA9 (2294 aa).

Residues 4-409 (PEPVAIIGMG…GANATAIVEA (406 aa)) form the Ketosynthase family 3 (KS3) domain. Residues 537–853 (IFTGQGAQNA…DYAATLVRGQ (317 aa)) form a malonyl-CoA:ACP transacylase (MAT) domain region. The For malonyltransferase activity role is filled by S630. Residues 930–1067 (HDLLGAILPG…GTVTKKKAVT (138 aa)) form an N-terminal hotdog fold region. A dehydratase (DH) domain region spans residues 930–1104 (HDLLGAILPG…LNYGPAFNGL (175 aa)). Positions 930–1236 (HDLLGAILPG…CTQYSEALDD (307 aa)) constitute a PKS/mFAS DH domain. The Proton acceptor; for dehydratase activity role is filled by H962. Residues 1078–1236 (QEPKAARTWY…CTQYSEALDD (159 aa)) form a C-terminal hotdog fold region. D1142 (proton donor; for dehydratase activity) is an active-site residue. The interval 1618–1908 (GIFDTIHFKD…KNSRIGRVVV (291 aa)) is enoyl reductase (ER) domain. Residues 1934–2107 (VHTYLLGVLE…LPATTISLTV (174 aa)) are ketoreductase (KR) domain. The 79-residue stretch at 2214 to 2292 (LLLPDILEMI…SLAKKIYDIR (79 aa)) folds into the Carrier domain. S2251 is subject to O-(pantetheine 4'-phosphoryl)serine.

It participates in polyketide biosynthesis. Its function is as follows. Reducing polyketide synthase; part of the gene cluster B that mediates the biosynthesis of botcinic acid and its botcinin derivatives, acetate-derived polyketides that contribute to virulence when combined with the sesquiterpene botrydial. Botcinic acid and its derivatives have been shown to induce chlorosis and necrosis during host plant infection, but also have antifungal activities. Two polyketide synthases, BOA6 and BOA9, are involved in the biosynthesis of botcinins. BOA6 mediates the formation of the per-methylated tetraketide core by condensation of four units of malonyl-CoA with one unit of acetyl-CoA, which would be methylated in activated methylene groups to yield a bicyclic acid intermediate that could then either be converted to botrylactone derivatives or lose the starter acetate unit through a retro-Claisen type C-C bond cleavage to yield botcinin derivatives. The second polyketide synthase, BOA9, is probably required for the biosynthesis of the tetraketide side chain of botcinins. The methyltransferase (MT) domain within BOA6 is probably responsible for the incorporation of four methyl groups. The trans-enoyl reductase BOA5 might take over the enoyl reductase function of BOA6 that misses an ER domain. The monooxygenases BOA2, BOA3 and BOA4 might be involved in further hydroxylations at C4, C5 and C8, whereas BOA7, close to BOA9, could potentially be involved in the hydroxylation at C4 in the side chain of botcinins. In Botryotinia fuckeliana (strain B05.10) (Noble rot fungus), this protein is Reducing polyketide synthase BOA9.